Consider the following 233-residue polypeptide: 5'-methylthioadenosine/S-adenosylhomocysteine nucleosidase (233 aa).

The Proton acceptor role is filled by Glu-12. Residues Gly-78, Ile-152, and 173–174 (ME) each bind substrate. The active-site Proton donor is the Asp-197.

This sequence belongs to the PNP/UDP phosphorylase family. MtnN subfamily. As to quaternary structure, homodimer.

The catalysed reaction is S-adenosyl-L-homocysteine + H2O = S-(5-deoxy-D-ribos-5-yl)-L-homocysteine + adenine. It catalyses the reaction S-methyl-5'-thioadenosine + H2O = 5-(methylsulfanyl)-D-ribose + adenine. It carries out the reaction 5'-deoxyadenosine + H2O = 5-deoxy-D-ribose + adenine. It functions in the pathway amino-acid biosynthesis; L-methionine biosynthesis via salvage pathway; S-methyl-5-thio-alpha-D-ribose 1-phosphate from S-methyl-5'-thioadenosine (hydrolase route): step 1/2. Functionally, catalyzes the irreversible cleavage of the glycosidic bond in both 5'-methylthioadenosine (MTA) and S-adenosylhomocysteine (SAH/AdoHcy) to adenine and the corresponding thioribose, 5'-methylthioribose and S-ribosylhomocysteine, respectively. Also cleaves 5'-deoxyadenosine, a toxic by-product of radical S-adenosylmethionine (SAM) enzymes, into 5-deoxyribose and adenine. Thus, is required for in vivo function of the radical SAM enzymes biotin synthase and lipoic acid synthase, that are inhibited by 5'-deoxyadenosine accumulation. The sequence is that of 5'-methylthioadenosine/S-adenosylhomocysteine nucleosidase from Yersinia pseudotuberculosis serotype O:1b (strain IP 31758).